Consider the following 632-residue polypeptide: tRNA uridine 5-carboxymethylaminomethyl modification enzyme MnmG (632 aa).

Residues Gly-13–Gly-18, Val-125, and Ser-180 each bind FAD. Gly-273–Phe-287 serves as a coordination point for NAD(+). Gln-370 is a binding site for FAD.

Belongs to the MnmG family. Homodimer. Heterotetramer of two MnmE and two MnmG subunits. FAD is required as a cofactor.

The protein localises to the cytoplasm. In terms of biological role, NAD-binding protein involved in the addition of a carboxymethylaminomethyl (cmnm) group at the wobble position (U34) of certain tRNAs, forming tRNA-cmnm(5)s(2)U34. The polypeptide is tRNA uridine 5-carboxymethylaminomethyl modification enzyme MnmG (Proteus mirabilis (strain HI4320)).